The primary structure comprises 294 residues: Release factor glutamine methyltransferase (294 aa).

The S-adenosyl-L-methionine site is built by E148 and N201. 201-204 (NPPY) contacts substrate.

The protein belongs to the protein N5-glutamine methyltransferase family. PrmC subfamily.

The enzyme catalyses L-glutaminyl-[peptide chain release factor] + S-adenosyl-L-methionine = N(5)-methyl-L-glutaminyl-[peptide chain release factor] + S-adenosyl-L-homocysteine + H(+). Methylates the class 1 translation termination release factors RF1/PrfA and RF2/PrfB on the glutamine residue of the universally conserved GGQ motif. In Bifidobacterium longum (strain NCC 2705), this protein is Release factor glutamine methyltransferase.